Reading from the N-terminus, the 1284-residue chain is A-type inclusion protein A25 homolog (1284 aa).

A disordered region spans residues Lys340–Glu383. Basic and acidic residues predominate over residues Glu348–Lys357. Repeat copies occupy residues Val611–Glu637, Asp638–Gly665, Asn666–Gly689, Asn690–Asp720, Thr721–Asp751, Met752–Thr780, Ser781–Ser811, Ala812–Ser842, Tyr843–Ala871, and Lys872–Glu912. Positions Val611 to Glu912 are 10 X approximate tandem repeats. The segment at Pro1169–Ser1234 is disordered. The segment covering Val1180–Pro1192 has biased composition (low complexity). Polar residues predominate over residues Ser1211–Ala1221.

Belongs to the poxviridae A25 protein family. Interacts (via N-terminus) with protein A26.

It localises to the virion. Its function is as follows. Structural protein that forms a matrix surrounding the mature virion (MV) through interaction with protein A26. Presence of protein A25 in the virion structurally prevents direct virus-cell fusion mechanism. The sequence is that of A-type inclusion protein A25 homolog (ATI) from Apodemus sylvaticus (European woodmouse).